The following is a 212-amino-acid chain: Holliday junction branch migration complex subunit RuvA (212 aa).

Residues 1-63 form a domain I region; sequence MIAKLKGLID…EDAISLFGFL (63 aa). The segment at 64-142 is domain II; that stretch reads ETGERDWFRL…KIALGGFSPG (79 aa). A flexible linker region spans residues 143–155; sequence GIKDALSASAPLP. Residues 156 to 212 are domain III; the sequence is AASGRMEDAVSALVNLGYKRLEAFQAVGETARELGDEADSSALIRAALKHLGKGLLG.

Belongs to the RuvA family. Homotetramer. Forms an RuvA(8)-RuvB(12)-Holliday junction (HJ) complex. HJ DNA is sandwiched between 2 RuvA tetramers; dsDNA enters through RuvA and exits via RuvB. An RuvB hexamer assembles on each DNA strand where it exits the tetramer. Each RuvB hexamer is contacted by two RuvA subunits (via domain III) on 2 adjacent RuvB subunits; this complex drives branch migration. In the full resolvosome a probable DNA-RuvA(4)-RuvB(12)-RuvC(2) complex forms which resolves the HJ.

It localises to the cytoplasm. Functionally, the RuvA-RuvB-RuvC complex processes Holliday junction (HJ) DNA during genetic recombination and DNA repair, while the RuvA-RuvB complex plays an important role in the rescue of blocked DNA replication forks via replication fork reversal (RFR). RuvA specifically binds to HJ cruciform DNA, conferring on it an open structure. The RuvB hexamer acts as an ATP-dependent pump, pulling dsDNA into and through the RuvAB complex. HJ branch migration allows RuvC to scan DNA until it finds its consensus sequence, where it cleaves and resolves the cruciform DNA. This is Holliday junction branch migration complex subunit RuvA from Paramagnetospirillum magneticum (strain ATCC 700264 / AMB-1) (Magnetospirillum magneticum).